A 717-amino-acid polypeptide reads, in one-letter code: Polyribonucleotide nucleotidyltransferase (717 aa).

Residues Asp-486 and Asp-492 each contribute to the Mg(2+) site. Residues 553–612 enclose the KH domain; the sequence is PKIVQLQIDIDKISLVIGSTGKTVKAITDEFEVRVQIEQDGRITLFGTDSLKMQKAKAKI. The S1 motif domain occupies 622–715; sequence GEIYDGIVKK…KFGKIELELV (94 aa). The disordered stretch occupies residues 659–689; the sequence is RYGDMRHSRYGSGRHSRYGRDNRNTFGMNPP. A compositionally biased stretch (basic residues) spans 666 to 675; the sequence is SRYGSGRHSR.

The protein belongs to the polyribonucleotide nucleotidyltransferase family. The cofactor is Mg(2+).

The protein localises to the cytoplasm. It carries out the reaction RNA(n+1) + phosphate = RNA(n) + a ribonucleoside 5'-diphosphate. Functionally, involved in mRNA degradation. Catalyzes the phosphorolysis of single-stranded polyribonucleotides processively in the 3'- to 5'-direction. The protein is Polyribonucleotide nucleotidyltransferase of Borrelia hermsii (strain HS1 / DAH).